The sequence spans 448 residues: Probable alpha-galactosidase B (448 aa).

The N-terminal stretch at 1-23 (MSRFHLPLAAAVVLVSCLWSANA) is a signal peptide. Disulfide bonds link Cys46-Cys78 and Cys128-Cys158. The active-site Nucleophile is Asp156. N-linked (GlcNAc...) asparagine glycosylation is found at Asn163 and Asn181. 226–230 (EWGQA) is a substrate binding site. The N-linked (GlcNAc...) asparagine glycan is linked to Asn237. The active-site Proton donor is Asp248.

This sequence belongs to the glycosyl hydrolase 27 family.

The protein localises to the secreted. It catalyses the reaction Hydrolysis of terminal, non-reducing alpha-D-galactose residues in alpha-D-galactosides, including galactose oligosaccharides, galactomannans and galactolipids.. Hydrolyzes a variety of simple alpha-D-galactoside as well as more complex molecules such as oligosaccharides and polysaccharides. The sequence is that of Probable alpha-galactosidase B (aglB) from Aspergillus clavatus (strain ATCC 1007 / CBS 513.65 / DSM 816 / NCTC 3887 / NRRL 1 / QM 1276 / 107).